Here is a 342-residue protein sequence, read N- to C-terminus: Biotin synthase (342 aa).

Positions Asn-36–Ser-260 constitute a Radical SAM core domain. Residues Cys-51, Cys-55, and Cys-58 each coordinate [4Fe-4S] cluster. Positions 95, 126, 186, and 258 each coordinate [2Fe-2S] cluster.

The protein belongs to the radical SAM superfamily. Biotin synthase family. As to quaternary structure, homodimer. [4Fe-4S] cluster is required as a cofactor. [2Fe-2S] cluster serves as cofactor.

The catalysed reaction is (4R,5S)-dethiobiotin + (sulfur carrier)-SH + 2 reduced [2Fe-2S]-[ferredoxin] + 2 S-adenosyl-L-methionine = (sulfur carrier)-H + biotin + 2 5'-deoxyadenosine + 2 L-methionine + 2 oxidized [2Fe-2S]-[ferredoxin]. The protein operates within cofactor biosynthesis; biotin biosynthesis; biotin from 7,8-diaminononanoate: step 2/2. Functionally, catalyzes the conversion of dethiobiotin (DTB) to biotin by the insertion of a sulfur atom into dethiobiotin via a radical-based mechanism. In Buchnera aphidicola subsp. Schizaphis graminum (strain Sg), this protein is Biotin synthase.